Reading from the N-terminus, the 148-residue chain is Large ribosomal subunit protein bL9 (148 aa).

The protein belongs to the bacterial ribosomal protein bL9 family.

Its function is as follows. Binds to the 23S rRNA. This is Large ribosomal subunit protein bL9 from Pseudomonas putida (strain W619).